We begin with the raw amino-acid sequence, 428 residues long: Tyrosine--tRNA ligase (428 aa).

Tyrosine 41 contacts L-tyrosine. The 'HIGH' region motif lies at 46-55 (PTADSLHLGH). L-tyrosine contacts are provided by tyrosine 179 and glutamine 183. The 'KMSKS' region motif lies at 239 to 243 (KFGKT). Residue lysine 242 coordinates ATP. The region spanning 361-418 (ADLMQALVDAELQPSRGQARKTIASNAVTINGEKQSDPEYIFNDEDRLFGRYTLLRRG) is the S4 RNA-binding domain.

This sequence belongs to the class-I aminoacyl-tRNA synthetase family. TyrS type 1 subfamily. Homodimer.

The protein localises to the cytoplasm. The catalysed reaction is tRNA(Tyr) + L-tyrosine + ATP = L-tyrosyl-tRNA(Tyr) + AMP + diphosphate + H(+). Functionally, catalyzes the attachment of tyrosine to tRNA(Tyr) in a two-step reaction: tyrosine is first activated by ATP to form Tyr-AMP and then transferred to the acceptor end of tRNA(Tyr). The polypeptide is Tyrosine--tRNA ligase (Salmonella paratyphi C (strain RKS4594)).